We begin with the raw amino-acid sequence, 143 residues long: Class I hydrophobin 20 (143 aa).

Positions Met1–Ala22 are cleaved as a signal peptide. Cystine bridges form between Cys54/Cys123, Cys62/Cys117, Cys63/Cys102, and Cys124/Cys137.

Belongs to the fungal hydrophobin family. In terms of assembly, self-assembles to form functional amyloid fibrils called rodlets. Self-assembly into fibrillar rodlets occurs spontaneously at hydrophobic:hydrophilic interfaces and the rodlets further associate laterally to form amphipathic monolayers.

It is found in the secreted. Its subcellular location is the cell wall. In terms of biological role, aerial growth, conidiation, and dispersal of filamentous fungi in the environment rely upon a capability of their secreting small amphipathic proteins called hydrophobins (HPBs) with low sequence identity. Class I can self-assemble into an outermost layer of rodlet bundles on aerial cell surfaces, conferring cellular hydrophobicity that supports fungal growth, development and dispersal; whereas Class II form highly ordered films at water-air interfaces through intermolecular interactions but contribute nothing to the rodlet structure. Hydph20 is a class I hydrophobin involved in mycelial growth. This is Class I hydrophobin 20 from Pleurotus ostreatus (strain PC15) (Oyster mushroom).